We begin with the raw amino-acid sequence, 282 residues long: NADPH-dependent 7-cyano-7-deazaguanine reductase (282 aa).

Residue 88–90 participates in substrate binding; the sequence is IES. NADPH is bound at residue 90–91; it reads SK. Cys-190 acts as the Thioimide intermediate in catalysis. Residue Asp-197 is the Proton donor of the active site. Residue 229–230 coordinates substrate; sequence HE. 258–259 contributes to the NADPH binding site; that stretch reads RG.

Belongs to the GTP cyclohydrolase I family. QueF type 2 subfamily. In terms of assembly, homodimer.

The protein localises to the cytoplasm. The enzyme catalyses 7-aminomethyl-7-carbaguanine + 2 NADP(+) = 7-cyano-7-deazaguanine + 2 NADPH + 3 H(+). It functions in the pathway tRNA modification; tRNA-queuosine biosynthesis. Catalyzes the NADPH-dependent reduction of 7-cyano-7-deazaguanine (preQ0) to 7-aminomethyl-7-deazaguanine (preQ1). The protein is NADPH-dependent 7-cyano-7-deazaguanine reductase of Salmonella heidelberg (strain SL476).